The sequence spans 217 residues: Peptidyl-tRNA hydrolase (217 aa).

Tyrosine 14 is a tRNA binding site. The active-site Proton acceptor is the histidine 19. 3 residues coordinate tRNA: tyrosine 64, asparagine 66, and asparagine 113. The interval 182 to 217 (MNRINAPPPKPKREQKRSSDAPDSSSDTNTSNASDG) is disordered. Over residues 202–217 (APDSSSDTNTSNASDG) the composition is skewed to low complexity.

This sequence belongs to the PTH family. In terms of assembly, monomer.

It localises to the cytoplasm. It catalyses the reaction an N-acyl-L-alpha-aminoacyl-tRNA + H2O = an N-acyl-L-amino acid + a tRNA + H(+). Hydrolyzes ribosome-free peptidyl-tRNAs (with 1 or more amino acids incorporated), which drop off the ribosome during protein synthesis, or as a result of ribosome stalling. In terms of biological role, catalyzes the release of premature peptidyl moieties from peptidyl-tRNA molecules trapped in stalled 50S ribosomal subunits, and thus maintains levels of free tRNAs and 50S ribosomes. The sequence is that of Peptidyl-tRNA hydrolase from Roseiflexus sp. (strain RS-1).